The chain runs to 203 residues: uncharacterized protein (203 aa).

An N-terminal signal peptide occupies residues 1 to 31 (MKKTFVKKAMLTTAAMTSAALLTFGPDAASA).

This is an uncharacterized protein from Bacillus subtilis (strain 168).